The following is a 136-amino-acid chain: Mini-ribonuclease 3 (136 aa).

Residue aspartate 20 is part of the active site.

The protein belongs to the MrnC RNase family. In terms of assembly, homodimer. Mg(2+) serves as cofactor.

It is found in the cytoplasm. Its function is as follows. Involved in correct processing of both the 5' and 3' ends of 23S rRNA precursor. Processes 30S rRNA precursor transcript even in absence of ribonuclease 3 (Rnc); Rnc processes 30S rRNA into smaller rRNA precursors. The chain is Mini-ribonuclease 3 from Listeria monocytogenes serovar 1/2a (strain ATCC BAA-679 / EGD-e).